Consider the following 410-residue polypeptide: Peptidase T (410 aa).

His78 serves as a coordination point for Zn(2+). Asp80 is an active-site residue. Asp140 is a binding site for Zn(2+). Glu174 (proton acceptor) is an active-site residue. Positions 175, 197, and 379 each coordinate Zn(2+).

The protein belongs to the peptidase M20B family. The cofactor is Zn(2+).

The protein localises to the cytoplasm. The catalysed reaction is Release of the N-terminal residue from a tripeptide.. Cleaves the N-terminal amino acid of tripeptides. The protein is Peptidase T of Vibrio cholerae serotype O1 (strain ATCC 39315 / El Tor Inaba N16961).